A 2282-amino-acid polypeptide reads, in one-letter code: Ectopic P granules protein 5 homolog (2282 aa).

This sequence belongs to the EPG5 family.

Its function is as follows. Involved in autophagy. This Aedes aegypti (Yellowfever mosquito) protein is Ectopic P granules protein 5 homolog.